Consider the following 347-residue polypeptide: Phenylalanine--tRNA ligase alpha subunit (347 aa).

Glu-259 contacts Mg(2+).

Belongs to the class-II aminoacyl-tRNA synthetase family. Phe-tRNA synthetase alpha subunit type 1 subfamily. As to quaternary structure, tetramer of two alpha and two beta subunits. It depends on Mg(2+) as a cofactor.

It localises to the cytoplasm. The enzyme catalyses tRNA(Phe) + L-phenylalanine + ATP = L-phenylalanyl-tRNA(Phe) + AMP + diphosphate + H(+). This is Phenylalanine--tRNA ligase alpha subunit from Oenococcus oeni (strain ATCC BAA-331 / PSU-1).